Reading from the N-terminus, the 402-residue chain is Phosphoglycerate kinase (402 aa).

Substrate is bound by residues 21 to 23 (DFN), Arg36, 59 to 62 (HLGR), Arg119, and Arg154. ATP-binding positions include Lys207, Gly298, Glu329, and 356–359 (GGDA).

Belongs to the phosphoglycerate kinase family. Monomer.

Its subcellular location is the cytoplasm. The enzyme catalyses (2R)-3-phosphoglycerate + ATP = (2R)-3-phospho-glyceroyl phosphate + ADP. It functions in the pathway carbohydrate degradation; glycolysis; pyruvate from D-glyceraldehyde 3-phosphate: step 2/5. The chain is Phosphoglycerate kinase (pgk) from Chlamydia pneumoniae (Chlamydophila pneumoniae).